A 276-amino-acid polypeptide reads, in one-letter code: Shikimate dehydrogenase (NADP(+)) (276 aa).

Residues 15–17 and Thr62 contribute to the shikimate site; that span reads SKS. Residue Lys66 is the Proton acceptor of the active site. Position 78 (Glu78) interacts with NADP(+). Residues Asn87 and Asp103 each coordinate shikimate. Residues 127–131, 150–155, and Met214 contribute to the NADP(+) site; these read GAGGV and NRTHIK. Tyr216 contacts shikimate. Gly239 contributes to the NADP(+) binding site.

The protein belongs to the shikimate dehydrogenase family. As to quaternary structure, homodimer.

It catalyses the reaction shikimate + NADP(+) = 3-dehydroshikimate + NADPH + H(+). It functions in the pathway metabolic intermediate biosynthesis; chorismate biosynthesis; chorismate from D-erythrose 4-phosphate and phosphoenolpyruvate: step 4/7. Involved in the biosynthesis of the chorismate, which leads to the biosynthesis of aromatic amino acids. Catalyzes the reversible NADPH linked reduction of 3-dehydroshikimate (DHSA) to yield shikimate (SA). The sequence is that of Shikimate dehydrogenase (NADP(+)) from Haemophilus ducreyi (strain 35000HP / ATCC 700724).